The sequence spans 731 residues: 1,4-alpha-glucan branching enzyme GlgB (731 aa).

Aspartate 411 functions as the Nucleophile in the catalytic mechanism. Glutamate 464 (proton donor) is an active-site residue.

Belongs to the glycosyl hydrolase 13 family. GlgB subfamily. In terms of assembly, monomer.

It catalyses the reaction Transfers a segment of a (1-&gt;4)-alpha-D-glucan chain to a primary hydroxy group in a similar glucan chain.. Its pathway is glycan biosynthesis; glycogen biosynthesis. Catalyzes the formation of the alpha-1,6-glucosidic linkages in glycogen by scission of a 1,4-alpha-linked oligosaccharide from growing alpha-1,4-glucan chains and the subsequent attachment of the oligosaccharide to the alpha-1,6 position. This is 1,4-alpha-glucan branching enzyme GlgB from Mycobacterium ulcerans (strain Agy99).